We begin with the raw amino-acid sequence, 521 residues long: Probable protein phosphatase 2C 16 (521 aa).

Positions 21–327 (KYVVSSMQGW…ENTTVILVQF (307 aa)) constitute a PPM-type phosphatase domain. 4 residues coordinate Mn(2+): Asp-57, Gly-58, Gln-276, and Glu-318. The interval 354–431 (AAPAGASDTS…ADADDGAPKP (78 aa)) is disordered.

This sequence belongs to the PP2C family. The cofactor is Mg(2+). It depends on Mn(2+) as a cofactor.

It catalyses the reaction O-phospho-L-seryl-[protein] + H2O = L-seryl-[protein] + phosphate. The catalysed reaction is O-phospho-L-threonyl-[protein] + H2O = L-threonyl-[protein] + phosphate. The chain is Probable protein phosphatase 2C 16 from Oryza sativa subsp. japonica (Rice).